We begin with the raw amino-acid sequence, 522 residues long: Probable protein kinase UbiB (522 aa).

The 378-residue stretch at 119–496 (SFDADPVASA…QRRTNRLLLT (378 aa)) folds into the Protein kinase domain. ATP contacts are provided by residues 125-133 (VASASIAQV) and K147. D282 functions as the Proton acceptor in the catalytic mechanism. Residues 494 to 514 (LLTVFYLIGGFVAGGLFAHWI) traverse the membrane as a helical segment.

The protein belongs to the ABC1 family. UbiB subfamily.

The protein localises to the cell inner membrane. The protein operates within cofactor biosynthesis; ubiquinone biosynthesis [regulation]. Is probably a protein kinase regulator of UbiI activity which is involved in aerobic coenzyme Q (ubiquinone) biosynthesis. The chain is Probable protein kinase UbiB from Leptothrix cholodnii (strain ATCC 51168 / LMG 8142 / SP-6) (Leptothrix discophora (strain SP-6)).